We begin with the raw amino-acid sequence, 338 residues long: Fructose-1,6-bisphosphatase class 1 (338 aa).

Residues Glu92, Asp115, Leu117, and Asp118 each coordinate Mg(2+). Substrate-binding positions include 118–121 (DGSS), Asn211, Tyr244, 262–264 (YLY), and Lys274. Residue Glu280 coordinates Mg(2+).

This sequence belongs to the FBPase class 1 family. As to quaternary structure, homotetramer. It depends on Mg(2+) as a cofactor.

It is found in the cytoplasm. The enzyme catalyses beta-D-fructose 1,6-bisphosphate + H2O = beta-D-fructose 6-phosphate + phosphate. Its pathway is carbohydrate biosynthesis; gluconeogenesis. The sequence is that of Fructose-1,6-bisphosphatase class 1 from Vibrio vulnificus (strain YJ016).